Consider the following 84-residue polypeptide: Small ribosomal subunit protein uS17 (84 aa).

The protein belongs to the universal ribosomal protein uS17 family. Part of the 30S ribosomal subunit.

In terms of biological role, one of the primary rRNA binding proteins, it binds specifically to the 5'-end of 16S ribosomal RNA. In Citrobacter koseri (strain ATCC BAA-895 / CDC 4225-83 / SGSC4696), this protein is Small ribosomal subunit protein uS17.